The primary structure comprises 652 residues: Acetyl-coenzyme A synthetase (652 aa).

CoA-binding positions include 191–194 (RAGR), threonine 311, and asparagine 335. Residues 387–389 (GEP), 411–416 (DTWWQT), aspartate 500, and arginine 515 contribute to the ATP site. Serine 523 contributes to the CoA binding site. Position 526 (arginine 526) interacts with ATP. Mg(2+) contacts are provided by valine 537, histidine 539, and isoleucine 542. Arginine 584 provides a ligand contact to CoA. Lysine 609 is modified (N6-acetyllysine).

It belongs to the ATP-dependent AMP-binding enzyme family. Mg(2+) is required as a cofactor. Post-translationally, acetylated. Deacetylation by the SIR2-homolog deacetylase activates the enzyme.

The enzyme catalyses acetate + ATP + CoA = acetyl-CoA + AMP + diphosphate. Functionally, catalyzes the conversion of acetate into acetyl-CoA (AcCoA), an essential intermediate at the junction of anabolic and catabolic pathways. Acs undergoes a two-step reaction. In the first half reaction, Acs combines acetate with ATP to form acetyl-adenylate (AcAMP) intermediate. In the second half reaction, it can then transfer the acetyl group from AcAMP to the sulfhydryl group of CoA, forming the product AcCoA. In terms of biological role, enables the cell to use acetate during aerobic growth to generate energy via the TCA cycle, and biosynthetic compounds via the glyoxylate shunt. Acetylates CheY, the response regulator involved in flagellar movement and chemotaxis. The chain is Acetyl-coenzyme A synthetase from Escherichia coli O157:H7.